Here is a 501-residue protein sequence, read N- to C-terminus: Lysine--tRNA ligase (501 aa).

2 residues coordinate Mg(2+): glutamate 412 and glutamate 419.

It belongs to the class-II aminoacyl-tRNA synthetase family. In terms of assembly, homodimer. It depends on Mg(2+) as a cofactor.

It localises to the cytoplasm. It catalyses the reaction tRNA(Lys) + L-lysine + ATP = L-lysyl-tRNA(Lys) + AMP + diphosphate. The polypeptide is Lysine--tRNA ligase (lysS) (Pasteurella multocida (strain Pm70)).